Reading from the N-terminus, the 284-residue chain is Putative xyloglucan endotransglucosylase/hydrolase protein 13 (284 aa).

A signal peptide spans 1-24 (MAAFTTKQSLLLLSLLLLISLSAG). One can recognise a GH16 domain in the interval 25–214 (SFYDNFDITW…WTNAPFSASY (190 aa)). Glutamate 100 (nucleophile) is an active-site residue. Residue glutamate 104 is the Proton donor of the active site. A xyloglucan-binding site is contributed by glutamate 104. Residue asparagine 108 is glycosylated (N-linked (GlcNAc...) asparagine). Xyloglucan-binding positions include 117–119 (HTN), 127–129 (NRE), 193–194 (DW), and glycine 198. Intrachain disulfides connect cysteine 223-cysteine 234 and cysteine 267-cysteine 281. Arginine 272 contacts xyloglucan.

This sequence belongs to the glycosyl hydrolase 16 family. XTH group 2 subfamily. In terms of processing, contains at least one intrachain disulfide bond essential for its enzymatic activity.

It localises to the secreted. The protein resides in the cell wall. It is found in the extracellular space. The protein localises to the apoplast. It carries out the reaction breaks a beta-(1-&gt;4) bond in the backbone of a xyloglucan and transfers the xyloglucanyl segment on to O-4 of the non-reducing terminal glucose residue of an acceptor, which can be a xyloglucan or an oligosaccharide of xyloglucan.. In terms of biological role, may catalyze xyloglucan endohydrolysis (XEH) and/or endotransglycosylation (XET). Cleaves and religates xyloglucan polymers, an essential constituent of the primary cell wall, and thereby participates in cell wall construction of growing tissues. The chain is Putative xyloglucan endotransglucosylase/hydrolase protein 13 (XTH13) from Arabidopsis thaliana (Mouse-ear cress).